Here is a 248-residue protein sequence, read N- to C-terminus: 2,3-bisphosphoglycerate-dependent phosphoglycerate mutase (248 aa).

Substrate contacts are provided by residues 8–15 (RHGESTWN), 21–22 (TG), R60, 87–90 (ERHY), K98, 114–115 (RR), and 183–184 (GN). The Tele-phosphohistidine intermediate role is filled by H9. The active-site Proton donor/acceptor is E87.

The protein belongs to the phosphoglycerate mutase family. BPG-dependent PGAM subfamily. In terms of assembly, homodimer.

The enzyme catalyses (2R)-2-phosphoglycerate = (2R)-3-phosphoglycerate. The protein operates within carbohydrate degradation; glycolysis; pyruvate from D-glyceraldehyde 3-phosphate: step 3/5. In terms of biological role, catalyzes the interconversion of 2-phosphoglycerate and 3-phosphoglycerate. The chain is 2,3-bisphosphoglycerate-dependent phosphoglycerate mutase from Burkholderia lata (strain ATCC 17760 / DSM 23089 / LMG 22485 / NCIMB 9086 / R18194 / 383).